Reading from the N-terminus, the 420-residue chain is Histidine--tRNA ligase (420 aa).

It belongs to the class-II aminoacyl-tRNA synthetase family. Homodimer.

The protein localises to the cytoplasm. The enzyme catalyses tRNA(His) + L-histidine + ATP = L-histidyl-tRNA(His) + AMP + diphosphate + H(+). The polypeptide is Histidine--tRNA ligase (Macrococcus caseolyticus (strain JCSC5402) (Macrococcoides caseolyticum)).